A 501-amino-acid polypeptide reads, in one-letter code: TGF-beta receptor type-1 (501 aa).

The first 29 residues, 1 to 29, serve as a signal peptide directing secretion; sequence MEAASAALRRCLLLIVLVAAATLLPGAKA. At 30–124 the chain is on the extracellular side; the sequence is LQCFCHLCTK…QSAGLGPVEL (95 aa). Disulfide bonds link cysteine 32-cysteine 50, cysteine 34-cysteine 37, cysteine 44-cysteine 67, cysteine 82-cysteine 94, and cysteine 95-cysteine 100. Residue asparagine 41 is glycosylated (N-linked (GlcNAc...) asparagine). The chain crosses the membrane as a helical span at residues 125-145; sequence AAVIAGPVCFVCIALMLMVYI. Topologically, residues 146–501 are cytoplasmic; that stretch reads CHNRTVIHHR…QLSQQEGIKM (356 aa). Residue serine 163 is modified to Phosphoserine. The GS domain maps to 173 to 202; sequence TTLKDLIYDMTTSGSGSGLPLLVQRTIART. Residues threonine 183 and threonine 184 each carry the phosphothreonine; by TGFBR2 modification. Phosphoserine; by TGFBR2 occurs at positions 185, 187, and 189. Residues 191–192 carry the FKBP1A-binding motif; it reads LP. Residues 203–493 form the Protein kinase domain; that stretch reads IVLQESIGKG…LRIKKTLSQL (291 aa). ATP is bound by residues 209 to 217 and lysine 230; that span reads IGKGRFGEV. The active-site Proton acceptor is aspartate 331. A Glycyl lysine isopeptide (Lys-Gly) (interchain with G-Cter in SUMO) cross-link involves residue lysine 389.

It belongs to the protein kinase superfamily. TKL Ser/Thr protein kinase family. TGFB receptor subfamily. As to quaternary structure, homodimer; in the endoplasmic reticulum but also at the cell membrane. Heterohexamer; TGFB1, TGFB2 and TGFB3 homodimeric ligands assemble a functional receptor composed of two TGFBR1 and TGFBR2 heterodimers to form a ligand-receptor heterohexamer. The respective affinity of TGBRB1 and TGFBR2 for the ligands may modulate the kinetics of assembly of the receptor and may explain the different biological activities of TGFB1, TGFB2 and TGFB3. Component of a complex composed of TSC22D1 (via N-terminus), TGFBR1 and TGFBR2; the interaction between TSC22D1 and TGFBR1 is inhibited by SMAD7 and promoted by TGFB1. Interacts with CD109; inhibits TGF-beta receptor activation in keratinocytes. Interacts with RBPMS. Interacts with SMAD2, SMAD3 and ZFYVE9; ZFYVE9 recruits SMAD2 and SMAD3 to the TGF-beta receptor. Interacts with TRAF6 and MAP3K7; induces MAP3K7 activation by TRAF6. Interacts with PARD6A; involved in TGF-beta induced epithelial to mesenchymal transition. Interacts with NEDD4L. Interacts with SMAD7, SMURF1 and SMURF2; SMAD7 recruits NEDD4L, SMURF1 and SMURF2 to the TGF-beta receptor. Interacts with USP15 and VPS39. Interacts (unphosphorylated) with FKBP1A; prevents TGFBR1 phosphorylation by TGFBR2 and stabilizes it in the inactive conformation. Interacts with SDCBP (via C-terminus). Interacts with CAV1 and this interaction is impaired in the presence of SDCBP. Interacts with APPL1; interaction is TGF beta dependent; mediates trafficking of the TGFBR1 from the endosomes to the nucleus via microtubules in a TRAF6-dependent manner. Interacts with GPR50; this interaction promotes the constitutive activation of SMAD signaling pathway. The cofactor is Mg(2+). It depends on Mn(2+) as a cofactor. Post-translationally, phosphorylated at basal levels in the absence of ligand. Activated upon phosphorylation by TGFBR2, mainly in the GS domain. Phosphorylation in the GS domain abrogates FKBP1A-binding. In terms of processing, N-Glycosylated. Ubiquitinated; undergoes ubiquitination catalyzed by several E3 ubiquitin ligases including SMURF1, SMURF2 and NEDD4L2. Results in the proteasomal and/or lysosomal degradation of the receptor thereby negatively regulating its activity. Deubiquitinated by USP15, leading to stabilization of the protein and enhanced TGF-beta signal. Its ubiquitination and proteasome-mediated degradation is negatively regulated by SDCBP. As to expression, urogenital ridge, testis, ovary, brain and lungs.

Its subcellular location is the cell membrane. The protein resides in the cell junction. The protein localises to the tight junction. It localises to the membrane raft. It is found in the cell surface. The enzyme catalyses L-threonyl-[receptor-protein] + ATP = O-phospho-L-threonyl-[receptor-protein] + ADP + H(+). The catalysed reaction is L-seryl-[receptor-protein] + ATP = O-phospho-L-seryl-[receptor-protein] + ADP + H(+). Its activity is regulated as follows. Kept in an inactive conformation by FKBP1A preventing receptor activation in absence of ligand. CD109 is another inhibitor of the receptor. Functionally, transmembrane serine/threonine kinase forming with the TGF-beta type II serine/threonine kinase receptor, TGFBR2, the non-promiscuous receptor for the TGF-beta cytokines TGFB1, TGFB2 and TGFB3. Transduces the TGFB1, TGFB2 and TGFB3 signal from the cell surface to the cytoplasm and is thus regulating a plethora of physiological and pathological processes including cell cycle arrest in epithelial and hematopoietic cells, control of mesenchymal cell proliferation and differentiation, wound healing, extracellular matrix production, immunosuppression and carcinogenesis. The formation of the receptor complex composed of 2 TGFBR1 and 2 TGFBR2 molecules symmetrically bound to the cytokine dimer results in the phosphorylation and the activation of TGFBR1 by the constitutively active TGFBR2. Activated TGFBR1 phosphorylates SMAD2 which dissociates from the receptor and interacts with SMAD4. The SMAD2-SMAD4 complex is subsequently translocated to the nucleus where it modulates the transcription of the TGF-beta-regulated genes. This constitutes the canonical SMAD-dependent TGF-beta signaling cascade. Also involved in non-canonical, SMAD-independent TGF-beta signaling pathways. For instance, TGFBR1 induces TRAF6 autoubiquitination which in turn results in MAP3K7 ubiquitination and activation to trigger apoptosis. Also regulates epithelial to mesenchymal transition through a SMAD-independent signaling pathway through PARD6A phosphorylation and activation. This is TGF-beta receptor type-1 (Tgfbr1) from Rattus norvegicus (Rat).